The primary structure comprises 185 residues: ATP synthase subunit b (185 aa).

The chain crosses the membrane as a helical span at residues 26 to 46 (LVLIGFAILLFIVIKFVVPMF).

This sequence belongs to the ATPase B chain family. In terms of assembly, F-type ATPases have 2 components, F(1) - the catalytic core - and F(0) - the membrane proton channel. F(1) has five subunits: alpha(3), beta(3), gamma(1), delta(1), epsilon(1). F(0) has three main subunits: a(1), b(2) and c(10-14). The alpha and beta chains form an alternating ring which encloses part of the gamma chain. F(1) is attached to F(0) by a central stalk formed by the gamma and epsilon chains, while a peripheral stalk is formed by the delta and b chains.

The protein localises to the cell membrane. F(1)F(0) ATP synthase produces ATP from ADP in the presence of a proton or sodium gradient. F-type ATPases consist of two structural domains, F(1) containing the extramembraneous catalytic core and F(0) containing the membrane proton channel, linked together by a central stalk and a peripheral stalk. During catalysis, ATP synthesis in the catalytic domain of F(1) is coupled via a rotary mechanism of the central stalk subunits to proton translocation. Its function is as follows. Component of the F(0) channel, it forms part of the peripheral stalk, linking F(1) to F(0). The sequence is that of ATP synthase subunit b from Renibacterium salmoninarum (strain ATCC 33209 / DSM 20767 / JCM 11484 / NBRC 15589 / NCIMB 2235).